A 117-amino-acid chain; its full sequence is MAWTSLILSLLALCSGASSQAVVTQESALTTSPGGTVILTCRSSTGAVTTSNYANWVQEKPDHLFTGLIGGTSNRAPGVPVRFSGSLIGDKAALTITGAQTEDDAMYFCALWYSTHF.

The N-terminal stretch at Met-1–Ser-19 is a signal peptide. Pyrrolidone carboxylic acid is present on Gln-20. The 98-residue stretch at Gln-20–Phe-117 folds into the Ig-like domain.

The chain is Immunoglobulin lambda variable 2 from Mus musculus (Mouse).